The sequence spans 220 residues: MICLPVVEDSVEKAIKTAEKYLEIADIVEFRIDMLKEVSEEDIEKFAKYPCIITVRADWEGGYWKGNNEERLNLIKKAIECNAKFVDIELREEKNKELVKFRDEIGSKTKIIISYHDFEKTPSKEKLVEIVEKALSIGDIAKFATMANSKEDVLNILEVINKYPGKIIGIGMGEKGKLTRILGVYFGSILTFASYKGKSSAPGQVDIDTLKEIWRLMDLK.

Residues 29 to 31 (EFR) and Arg56 contribute to the 3-dehydroquinate site. Residue His116 is the Proton donor/acceptor of the active site. Lys142 acts as the Schiff-base intermediate with substrate in catalysis. 3-dehydroquinate contacts are provided by Arg180, Ser200, and Gln204.

It belongs to the type-I 3-dehydroquinase family. As to quaternary structure, homodimer.

The enzyme catalyses 3-dehydroquinate = 3-dehydroshikimate + H2O. It participates in metabolic intermediate biosynthesis; chorismate biosynthesis; chorismate from D-erythrose 4-phosphate and phosphoenolpyruvate: step 3/7. Functionally, involved in the third step of the chorismate pathway, which leads to the biosynthesis of aromatic amino acids. Catalyzes the cis-dehydration of 3-dehydroquinate (DHQ) and introduces the first double bond of the aromatic ring to yield 3-dehydroshikimate. This is 3-dehydroquinate dehydratase from Methanocaldococcus jannaschii (strain ATCC 43067 / DSM 2661 / JAL-1 / JCM 10045 / NBRC 100440) (Methanococcus jannaschii).